A 149-amino-acid chain; its full sequence is 3-dehydroquinate dehydratase (149 aa).

Tyrosine 25 (proton acceptor) is an active-site residue. 3 residues coordinate substrate: asparagine 76, histidine 82, and aspartate 89. The active-site Proton donor is the histidine 102. Substrate-binding positions include 103–104 and arginine 113; that span reads LS.

This sequence belongs to the type-II 3-dehydroquinase family. In terms of assembly, homododecamer.

It catalyses the reaction 3-dehydroquinate = 3-dehydroshikimate + H2O. The protein operates within metabolic intermediate biosynthesis; chorismate biosynthesis; chorismate from D-erythrose 4-phosphate and phosphoenolpyruvate: step 3/7. Its function is as follows. Catalyzes a trans-dehydration via an enolate intermediate. In Acaryochloris marina (strain MBIC 11017), this protein is 3-dehydroquinate dehydratase.